The primary structure comprises 204 residues: Thymidylate kinase (204 aa).

An ATP-binding site is contributed by 11–18 (GLDKSGKT).

Belongs to the thymidylate kinase family.

It catalyses the reaction dTMP + ATP = dTDP + ADP. It functions in the pathway pyrimidine metabolism; dTTP biosynthesis. This chain is Thymidylate kinase (TMK), found in Camelus.